We begin with the raw amino-acid sequence, 299 residues long: Exosome complex component rrp42 (299 aa).

The protein belongs to the RNase PH family. As to quaternary structure, component of the RNA exosome complex. Specifically part of the catalytically inactive RNA exosome core complex (Exo-9) which may associate with the catalytic subunits rrp6 and dis3 in cytoplasmic- and nuclear-specific RNA exosome complex forms. Exo-9 is formed by a hexameric base ring of RNase PH domain-containing subunits and a cap ring consisting of csl4, rrp4 and rrp40.

It is found in the cytoplasm. The protein resides in the nucleus. Its subcellular location is the nucleolus. In terms of biological role, non-catalytic component of the RNA exosome complex which has 3'-&gt;5' exoribonuclease activity and participates in a multitude of cellular RNA processing and degradation events. In the nucleus, the RNA exosome complex is involved in proper maturation of stable RNA species such as rRNA, snRNA and snoRNA, in the elimination of RNA processing by-products and non-coding 'pervasive' transcripts, such as antisense RNA species and cryptic unstable transcripts (CUTs), and of mRNAs with processing defects, thereby limiting or excluding their export to the cytoplasm. In the cytoplasm, the RNA exosome complex is involved in general mRNA turnover and in RNA surveillance pathways, preventing translation of aberrant mRNAs. The catalytic inactive RNA exosome core complex of 9 subunits (Exo-9) is proposed to play a pivotal role in the binding and presentation of RNA for ribonucleolysis, and to serve as a scaffold for the association with catalytic subunits and accessory proteins or complexes. ski6 is part of the hexameric ring of RNase PH domain-containing subunits proposed to form a central channel which threads RNA substrates for degradation. The chain is Exosome complex component rrp42 (rrp42) from Schizosaccharomyces pombe (strain 972 / ATCC 24843) (Fission yeast).